The chain runs to 431 residues: Adenylosuccinate lyase (431 aa).

Residues 4-5 (RY), 67-69 (RHD), and 93-94 (TS) contribute to the N(6)-(1,2-dicarboxyethyl)-AMP site. The active-site Proton donor/acceptor is the His141. Gln212 is a binding site for N(6)-(1,2-dicarboxyethyl)-AMP. Catalysis depends on Ser262, which acts as the Proton donor/acceptor. N(6)-(1,2-dicarboxyethyl)-AMP contacts are provided by residues Ser263, 268 to 270 (KRN), Asn276, and 307 to 311 (SAERI).

Belongs to the lyase 1 family. Adenylosuccinate lyase subfamily. In terms of assembly, homodimer and homotetramer. Residues from neighboring subunits contribute catalytic and substrate-binding residues to each active site.

The enzyme catalyses N(6)-(1,2-dicarboxyethyl)-AMP = fumarate + AMP. The catalysed reaction is (2S)-2-[5-amino-1-(5-phospho-beta-D-ribosyl)imidazole-4-carboxamido]succinate = 5-amino-1-(5-phospho-beta-D-ribosyl)imidazole-4-carboxamide + fumarate. Its pathway is purine metabolism; AMP biosynthesis via de novo pathway; AMP from IMP: step 2/2. It participates in purine metabolism; IMP biosynthesis via de novo pathway; 5-amino-1-(5-phospho-D-ribosyl)imidazole-4-carboxamide from 5-amino-1-(5-phospho-D-ribosyl)imidazole-4-carboxylate: step 2/2. Its function is as follows. Catalyzes two reactions in de novo purine nucleotide biosynthesis. Catalyzes the breakdown of 5-aminoimidazole- (N-succinylocarboxamide) ribotide (SAICAR or 2-[5-amino-1-(5-phospho-beta-D-ribosyl)imidazole-4-carboxamido]succinate) to 5-aminoimidazole-4-carboxamide ribotide (AICAR or 5-amino-1-(5-phospho-beta-D-ribosyl)imidazole-4-carboxamide) and fumarate, and of adenylosuccinate (ADS or N(6)-(1,2-dicarboxyethyl)-AMP) to adenosine monophosphate (AMP) and fumarate. This is Adenylosuccinate lyase (purB) from Staphylococcus aureus (strain USA300).